A 129-amino-acid chain; its full sequence is Glycine cleavage system H protein (129 aa).

The Lipoyl-binding domain maps to 24-106; that stretch reads SYTVGISEHA…FGDGWFFRVM (83 aa). Lys-65 is subject to N6-lipoyllysine.

It belongs to the GcvH family. The glycine cleavage system is composed of four proteins: P, T, L and H. (R)-lipoate serves as cofactor.

Functionally, the glycine cleavage system catalyzes the degradation of glycine. The H protein shuttles the methylamine group of glycine from the P protein to the T protein. The protein is Glycine cleavage system H protein of Shewanella woodyi (strain ATCC 51908 / MS32).